The sequence spans 218 residues: MGQKVNPIGLRIGIIRDWESRWYAEKDYADLLHEDLKIREYLTKRLSDAAVSRIEIERAANRVNITIHTAKPGMVIGKGGSEVEALRKALNELTGKRVHINIVEIKKPDLEAKLVAENIARQIENRVSFRRAQKQAIQRTMRAGAKGIKTMVSGRLGGADIARSEHYSEGTVPLHTLRADIDYATAEADTTYGKIGVKVWIYRGEVLPTKKKTEEGGN.

Positions 38 to 106 (IREYLTKRLS…RVHINIVEIK (69 aa)) constitute a KH type-2 domain.

Belongs to the universal ribosomal protein uS3 family. As to quaternary structure, part of the 30S ribosomal subunit. Forms a tight complex with proteins S10 and S14.

In terms of biological role, binds the lower part of the 30S subunit head. Binds mRNA in the 70S ribosome, positioning it for translation. This chain is Small ribosomal subunit protein uS3, found in Anoxybacillus flavithermus (strain DSM 21510 / WK1).